The primary structure comprises 426 residues: MRGLKTLSKRYLFTSESVTEGHPDKVCDQISDTILDALLTLDPNSRVAAETVVNTGLTLVTGEITSQAHINFVELIRQKIAEIGYTNADNGYSANSCAVMLAIDEQSPDISQGVTAAQEQRHALSDDELDKIGAGDQGLMFGYACNETPELMPLPISLAHRIALRLSEVRKSGQLAYLRPDGKTQVSILYEDGSPVAIDTILISTQHDEHIGDITDNDAVQAKIKADLWDVVVGHCFSDIALKPTDKTRFIVNPTGKFVVGGPQGDAGLTGRKIIVDTYGGYSRHGGGAFSGKDPTKVDRSAAYAARYVAKNIVAAGLADKCEVQVSYAIGVARPVSVLIDTFGTGKVDEEKLLEVVLANFELRPAGIIQSLNLRNLPAERGGRFYQDVAAYGHFGRNDLDLPWEYTDKVDVLKAAFASSPQAVAV.

Histidine 22 is an ATP binding site. Aspartate 24 is a Mg(2+) binding site. Glutamate 50 is a binding site for K(+). Positions 63 and 106 each coordinate L-methionine. The segment at 106-116 (QSPDISQGVTA) is flexible loop. Residues 181-183 (DGK), 257-258 (KF), aspartate 266, 272-273 (RK), alanine 289, and lysine 293 each bind ATP. Aspartate 266 contributes to the L-methionine binding site. Lysine 297 lines the L-methionine pocket.

The protein belongs to the AdoMet synthase family. As to quaternary structure, homotetramer; dimer of dimers. It depends on Mg(2+) as a cofactor. K(+) serves as cofactor.

The protein localises to the cytoplasm. It carries out the reaction L-methionine + ATP + H2O = S-adenosyl-L-methionine + phosphate + diphosphate. It participates in amino-acid biosynthesis; S-adenosyl-L-methionine biosynthesis; S-adenosyl-L-methionine from L-methionine: step 1/1. Functionally, catalyzes the formation of S-adenosylmethionine (AdoMet) from methionine and ATP. The overall synthetic reaction is composed of two sequential steps, AdoMet formation and the subsequent tripolyphosphate hydrolysis which occurs prior to release of AdoMet from the enzyme. This is S-adenosylmethionine synthase from Synechocystis sp. (strain ATCC 27184 / PCC 6803 / Kazusa).